The sequence spans 469 residues: Argininosuccinate lyase (469 aa).

This sequence belongs to the lyase 1 family. Argininosuccinate lyase subfamily.

Its subcellular location is the cytoplasm. The enzyme catalyses 2-(N(omega)-L-arginino)succinate = fumarate + L-arginine. It functions in the pathway amino-acid biosynthesis; L-arginine biosynthesis; L-arginine from L-ornithine and carbamoyl phosphate: step 3/3. In Burkholderia cenocepacia (strain ATCC BAA-245 / DSM 16553 / LMG 16656 / NCTC 13227 / J2315 / CF5610) (Burkholderia cepacia (strain J2315)), this protein is Argininosuccinate lyase.